We begin with the raw amino-acid sequence, 236 residues long: 2-C-methyl-D-erythritol 4-phosphate cytidylyltransferase (236 aa).

The protein belongs to the IspD/TarI cytidylyltransferase family. IspD subfamily.

It carries out the reaction 2-C-methyl-D-erythritol 4-phosphate + CTP + H(+) = 4-CDP-2-C-methyl-D-erythritol + diphosphate. The protein operates within isoprenoid biosynthesis; isopentenyl diphosphate biosynthesis via DXP pathway; isopentenyl diphosphate from 1-deoxy-D-xylulose 5-phosphate: step 2/6. Its function is as follows. Catalyzes the formation of 4-diphosphocytidyl-2-C-methyl-D-erythritol from CTP and 2-C-methyl-D-erythritol 4-phosphate (MEP). The polypeptide is 2-C-methyl-D-erythritol 4-phosphate cytidylyltransferase (Pseudomonas syringae pv. syringae (strain B728a)).